A 142-amino-acid polypeptide reads, in one-letter code: Serine protease inhibitor (142 aa).

N-acetylserine is present on Ser1.

Functionally, serine protease inhibitor. Active against beta-trypsin and alpha-chymotrypsin with dissociation constants of 0.35 nM and 40 nM respectively. Inhibits factor XIa, but not other enzymes involved in coagulation and fibrinolysis. Does not inhibit subtilisin, lysyl endopeptidase, arginyl endopeptidase or papain. In Lentinula edodes (Shiitake mushroom), this protein is Serine protease inhibitor.